Reading from the N-terminus, the 1168-residue chain is DNA-directed RNA polymerase subunit beta (1168 aa).

This sequence belongs to the RNA polymerase beta chain family. In terms of assembly, the RNAP catalytic core consists of 2 alpha, 1 beta, 1 beta' and 1 omega subunit. When a sigma factor is associated with the core the holoenzyme is formed, which can initiate transcription.

The catalysed reaction is RNA(n) + a ribonucleoside 5'-triphosphate = RNA(n+1) + diphosphate. DNA-dependent RNA polymerase catalyzes the transcription of DNA into RNA using the four ribonucleoside triphosphates as substrates. This is DNA-directed RNA polymerase subunit beta from Rhodococcus opacus (strain B4).